Consider the following 374-residue polypeptide: Histidinol-phosphate aminotransferase (374 aa).

Position 215 is an N6-(pyridoxal phosphate)lysine (lysine 215).

It belongs to the class-II pyridoxal-phosphate-dependent aminotransferase family. Histidinol-phosphate aminotransferase subfamily. In terms of assembly, homodimer. Pyridoxal 5'-phosphate is required as a cofactor.

The catalysed reaction is L-histidinol phosphate + 2-oxoglutarate = 3-(imidazol-4-yl)-2-oxopropyl phosphate + L-glutamate. It functions in the pathway amino-acid biosynthesis; L-histidine biosynthesis; L-histidine from 5-phospho-alpha-D-ribose 1-diphosphate: step 7/9. The sequence is that of Histidinol-phosphate aminotransferase from Yersinia enterocolitica serotype O:8 / biotype 1B (strain NCTC 13174 / 8081).